Here is a 497-residue protein sequence, read N- to C-terminus: COP9 signalosome complex subunit 6 (497 aa).

Positions 21–162 (VALHPLPILE…LTIYESNLEI (142 aa)) constitute an MPN domain. Disordered regions lie at residues 230–282 (ATED…KNRD), 324–350 (YLSSGDASSQQQQQQQQQQQTEGLDQP), and 435–497 (AKNS…RFDH). Basic and acidic residues predominate over residues 236-246 (SDKPLMKKVVD). Low complexity-rich tracts occupy residues 258–272 (SDDAAAEAPTTSSAA) and 333–343 (QQQQQQQQQQQ). Residues 440-453 (RREQASHGGGERFN) show a composition bias toward basic and acidic residues. Residues 475-488 (VGEGSASGSGGSGP) show a composition bias toward gly residues.

It belongs to the peptidase M67A family. CSN6 subfamily. As to quaternary structure, component of the COP9 signalosome (CSN) complex.

It is found in the cytoplasm. Its subcellular location is the nucleus. In terms of biological role, component of the COP9 signalosome (CSN) complex that acts as an regulator of the ubiquitin (Ubl) conjugation pathway by mediating the deneddylation of the cullin subunit of SCF-type E3 ubiquitin-protein ligase complexes. The CSN complex is involved in the regulation of the circadian clock through its control of the stability of the SCF(FWD1) complex. In Neurospora crassa (strain ATCC 24698 / 74-OR23-1A / CBS 708.71 / DSM 1257 / FGSC 987), this protein is COP9 signalosome complex subunit 6 (csn-6).